The following is a 300-amino-acid chain: Meiosis-specific cyclin crs1 (300 aa).

The Cyclin N-terminal domain occupies 61–183; the sequence is IIEQEKKGLT…VLALLNFDIY (123 aa).

This sequence belongs to the cyclin family. Cyclin AB subfamily.

The protein localises to the cytoplasm. The protein resides in the nucleus. In terms of biological role, has a role in meiotic chromosome segregation. This chain is Meiosis-specific cyclin crs1 (crs1), found in Schizosaccharomyces pombe (strain 972 / ATCC 24843) (Fission yeast).